The chain runs to 281 residues: Ras-related protein Rab-40C (281 aa).

The GTP site is built by S23, G26, K27, and S46. The interval 41 to 49 (SPYAYSNGI) is switch-I. Mg(2+) contacts are provided by S46 and D69. Residues G72, N126, and R127 each coordinate GTP. The interval 72–88 (GQGRFCTIFRSYSRGAQ) is switch-II. The SOCS box domain occupies 175 to 228 (LMRHGMEKIWRPNRVFSLQDLCCRAIVSCTPVHLIDKLPLPVTIKSHLKSFSMA). The tract at residues 245 to 281 (SGAGGSGSKGNSLKRSKSIRPPQSPPQNCSRSNCKIS) is disordered. Residues 270 to 281 (PQNCSRSNCKIS) show a composition bias toward polar residues. A lipid anchor (S-palmitoyl cysteine) is attached at C273. C278 carries the S-geranylgeranyl cysteine lipid modification.

The protein belongs to the small GTPase superfamily. Rab family. In terms of assembly, component of the cullin-5-RING E3 ubiquitin-protein ligase complex (ECS(RAB40C) complex) composed of CUL5, Elongin BC (ELOB and ELOC), RNF7/RBX2 and RAB40C. Interacts with protein phosphatase 6 (PP6) complex components ANKRD28, ANKRD52, PPP6C, PP6R1 and PP6R2; the interaction leads to ANKRD28 ubiquitination and decreased PP6 activity. Interacts with DAB2IP; DAB2IP acts as a GAP for RAB40C. It depends on Mg(2+) as a cofactor.

Its subcellular location is the cell membrane. The protein localises to the cytoplasm. The protein resides in the cytosol. It is found in the golgi apparatus membrane. It catalyses the reaction GTP + H2O = GDP + phosphate + H(+). Its pathway is protein modification; protein ubiquitination. With respect to regulation, regulated by guanine nucleotide exchange factors (GEFs) which promote the exchange of bound GDP for free GTP. Regulated by GTPase activating proteins (GAPs) including DAB2IP, which increase the GTP hydrolysis activity. Inhibited by GDP dissociation inhibitors (GDIs). In terms of biological role, RAB40C small GTPase acts as substrate-recognition component of the ECS(RAB40C) E3 ubiquitin ligase complex which mediates the ubiquitination and subsequent proteasomal degradation of target proteins. The Rab40 subfamily belongs to the Rab family that are key regulators of intracellular membrane trafficking, from the formation of transport vesicles to their fusion with membranes. Rabs cycle between an inactive GDP-bound form and an active GTP-bound form that is able to recruit to membranes different sets of downstream effectors directly responsible for vesicle formation, movement, tethering and fusion. As part of the ECS(RAB40C) complex, mediates ANKRD28 ubiquitination and degradation, thereby inhibiting protein phosphatase 6 (PP6) complex activity and focal adhesion assembly during cell migration. Also negatively regulate lipid droplets accumulation in a GTP-dependent manner. The protein is Ras-related protein Rab-40C of Mus musculus (Mouse).